A 243-amino-acid chain; its full sequence is Cytochrome c oxidase subunit 2 (243 aa).

At 1-34 the chain is on the mitochondrial intermembrane side; sequence MNNIIHNDAPTPWGIYFQDGASPVYDGIVELHDQ. Residues 35–55 traverse the membrane as a helical segment; that stretch reads VLFYLLIVLVGVSWILFSTIL. The Mitochondrial matrix segment spans residues 56–74; it reads RFRGSGIVHKYHNHSTTIE. Residues 75 to 97 traverse the membrane as a helical segment; the sequence is FVWTVSPALLLIAIAFPSFKLLY. The Mitochondrial intermembrane portion of the chain corresponds to 98–243; it reads LMDEVIDPSI…EKFLSWLDNQ (146 aa). The Cu cation site is built by histidine 178, cysteine 213, glutamate 215, cysteine 217, histidine 221, and methionine 224. Glutamate 215 lines the Mg(2+) pocket.

The protein belongs to the cytochrome c oxidase subunit 2 family. As to quaternary structure, component of the cytochrome c oxidase (complex IV, CIV), a multisubunit enzyme composed of a catalytic core of 3 subunits and several supernumerary subunits. The complex exists as a monomer or a dimer and forms supercomplexes (SCs) in the inner mitochondrial membrane with ubiquinol-cytochrome c oxidoreductase (cytochrome b-c1 complex, complex III, CIII). It depends on Cu cation as a cofactor.

Its subcellular location is the mitochondrion inner membrane. It catalyses the reaction 4 Fe(II)-[cytochrome c] + O2 + 8 H(+)(in) = 4 Fe(III)-[cytochrome c] + 2 H2O + 4 H(+)(out). Component of the cytochrome c oxidase, the last enzyme in the mitochondrial electron transport chain which drives oxidative phosphorylation. The respiratory chain contains 3 multisubunit complexes succinate dehydrogenase (complex II, CII), ubiquinol-cytochrome c oxidoreductase (cytochrome b-c1 complex, complex III, CIII) and cytochrome c oxidase (complex IV, CIV), that cooperate to transfer electrons derived from NADH and succinate to molecular oxygen, creating an electrochemical gradient over the inner membrane that drives transmembrane transport and the ATP synthase. Cytochrome c oxidase is the component of the respiratory chain that catalyzes the reduction of oxygen to water. Electrons originating from reduced cytochrome c in the intermembrane space (IMS) are transferred via the dinuclear copper A center (CU(A)) of subunit 2 and heme A of subunit 1 to the active site in subunit 1, a binuclear center (BNC) formed by heme A3 and copper B (CU(B)). The BNC reduces molecular oxygen to 2 water molecules using 4 electrons from cytochrome c in the IMS and 4 protons from the mitochondrial matrix. This Pneumocystis carinii protein is Cytochrome c oxidase subunit 2.